We begin with the raw amino-acid sequence, 224 residues long: UPF0758 protein BLi02933/BL00636 (224 aa).

The MPN domain maps to 102–224; sequence VIRFPEDAAN…FVSLKEKGYL (123 aa). Histidine 173, histidine 175, and aspartate 186 together coordinate Zn(2+). Positions 173–186 match the JAMM motif motif; sequence HNHPSGDPAPSRED.

It belongs to the UPF0758 family.

In Bacillus licheniformis (strain ATCC 14580 / DSM 13 / JCM 2505 / CCUG 7422 / NBRC 12200 / NCIMB 9375 / NCTC 10341 / NRRL NRS-1264 / Gibson 46), this protein is UPF0758 protein BLi02933/BL00636.